The primary structure comprises 279 residues: Dehydrogenase/reductase SDR family member 4 (279 aa).

NADP(+) is bound at residue leucine 37–valine 61. The residue at position 93 (lysine 93) is an N6-acetyllysine; alternate. An N6-succinyllysine; alternate modification is found at lysine 93. Serine 170 provides a ligand contact to substrate. The Proton acceptor role is filled by tyrosine 183. Residue lysine 187 coordinates NADP(+). Lysine 217 bears the N6-acetyllysine; alternate mark. At lysine 217 the chain carries N6-succinyllysine; alternate. Position 221 is a phosphoserine (serine 221). N6-succinyllysine occurs at positions 228 and 235. Residues serine 277–leucine 279 carry the Peroxisomal targeting signal motif.

It belongs to the short-chain dehydrogenases/reductases (SDR) family. In terms of assembly, homotetramer. In terms of tissue distribution, detected in heart, kidney, liver and small intestine. Detected at lower levels in brain, lung, stomach and spleen.

Its subcellular location is the peroxisome. It catalyses the reaction a secondary alcohol + NADP(+) = a ketone + NADPH + H(+). The catalysed reaction is 3alpha-hydroxy-5beta-pregnan-20-one + NADP(+) = 5beta-pregnan-3,20-dione + NADPH + H(+). The enzyme catalyses 5beta-dihydrotestosterone + NADPH + H(+) = 5beta-androstane-3alpha,17beta-diol + NADP(+). It carries out the reaction all-trans-retinol + NADP(+) = all-trans-retinal + NADPH + H(+). It catalyses the reaction isatin + NADPH + H(+) = 3-hydroxyindolin-2-one + NADP(+). Its activity is regulated as follows. Inhibited by kaempferol, quercetin, genistein and myristic acid. Its function is as follows. NADPH-dependent oxidoreductase which catalyzes the reduction of a variety of compounds bearing carbonyl groups including ketosteroids, alpha-dicarbonyl compounds, aldehydes, aromatic ketones and quinones. Reduces all-trans-retinal and 9-cis retinal. Reduces 3-ketosteroids and benzil into 3alpha-hydroxysteroids and S-benzoin, respectively, in contrast to the stereoselectivity of primates DHRS4s which produce 3beta-hydroxysteroids and R-benzoin. In the reverse reaction, catalyzes the NADP-dependent oxidation of 3alpha-hydroxysteroids and alcohol, but with much lower efficiency. Involved in the metabolism of 3alpha-hydroxysteroids, retinoid, isatin and xenobiotic carbonyl compounds. In Sus scrofa (Pig), this protein is Dehydrogenase/reductase SDR family member 4 (DHRS4).